Here is a 333-residue protein sequence, read N- to C-terminus: NADH-quinone oxidoreductase subunit H (333 aa).

The next 8 membrane-spanning stretches (helical) occupy residues 15–35 (IALFFGLGALLLAVVLAFVTY), 88–108 (YVLAPIIAFVPSFMVLAVLPF), 117–137 (IGVGLLYYIAVSGLTTVGVVA), 165–185 (LVMSALGVVLLAGSMNLVDIV), 191–211 (VWFIFAQPLAFLIFLIAAVAE), 241–261 (FFMLAEYVYLFAMAALVTILF), 274–294 (IPGAVWFALKFCAVVFVLIWF), and 313–333 (VLLPLSLVNIVLTAVVKAWFF).

The protein belongs to the complex I subunit 1 family. As to quaternary structure, NDH-1 is composed of 14 different subunits. Subunits NuoA, H, J, K, L, M, N constitute the membrane sector of the complex.

The protein localises to the cell membrane. It carries out the reaction a quinone + NADH + 5 H(+)(in) = a quinol + NAD(+) + 4 H(+)(out). Its function is as follows. NDH-1 shuttles electrons from NADH, via FMN and iron-sulfur (Fe-S) centers, to quinones in the respiratory chain. The immediate electron acceptor for the enzyme in this species is believed to be ubiquinone. Couples the redox reaction to proton translocation (for every two electrons transferred, four hydrogen ions are translocated across the cytoplasmic membrane), and thus conserves the redox energy in a proton gradient. This subunit may bind ubiquinone. This Geobacillus kaustophilus (strain HTA426) protein is NADH-quinone oxidoreductase subunit H.